Reading from the N-terminus, the 354-residue chain is UPF0421 protein BH2644 (354 aa).

4 consecutive transmembrane segments (helical) span residues 22–42 (AVCL…FAVI), 60–80 (LIRL…AYFF), 107–127 (TLVA…HLFA), and 133–153 (VAGT…ILPP).

This sequence belongs to the UPF0421 family.

It is found in the cell membrane. This is UPF0421 protein BH2644 from Halalkalibacterium halodurans (strain ATCC BAA-125 / DSM 18197 / FERM 7344 / JCM 9153 / C-125) (Bacillus halodurans).